The chain runs to 213 residues: Peroxynitrite isomerase 2 (213 aa).

The short motif at 58 to 64 is the GXWXGXG element; the sequence is GVWRGEG. Positions 176 and 203 each coordinate heme b.

It belongs to the nitrobindin family. As to quaternary structure, homodimer. Heme b serves as cofactor.

It carries out the reaction peroxynitrite = nitrate. Its pathway is nitrogen metabolism. Its function is as follows. Heme-binding protein able to scavenge peroxynitrite and to protect free L-tyrosine against peroxynitrite-mediated nitration, by acting as a peroxynitrite isomerase that converts peroxynitrite to nitrate. Therefore, this protein likely plays a role in peroxynitrite sensing and in the detoxification of reactive nitrogen and oxygen species (RNS and ROS, respectively). Is able to bind nitric oxide (NO) in vitro, but may act as a sensor of peroxynitrite levels in vivo. The sequence is that of Peroxynitrite isomerase 2 from Rhodococcus jostii (strain RHA1).